The sequence spans 322 residues: Protein mono-ADP-ribosyltransferase PARP16 (322 aa).

Residues 1–287 lie on the Cytoplasmic side of the membrane; the sequence is MQLSNRAAAR…RASSQLSWLS (287 aa). A PARP alpha-helical domain is found at 5-91; it reads NRAAAREAAS…AWDLVSWILS (87 aa). The PARP catalytic domain occupies 94-279; that stretch reads ILTIHSAKKA…VYSQKQPKRA (186 aa). Residues His-152, Tyr-182, and Tyr-254 each coordinate NAD(+). The helical transmembrane segment at 288 to 308 threads the bilayer; it reads SHWFVIMMSLYLLLLLIVSVT. Residues 309-322 lie on the Lumenal side of the membrane; the sequence is NSSVFHHFWNRVKR.

This sequence belongs to the ARTD/PARP family. In terms of assembly, interacts with KPNB1. In terms of processing, auto-mono-ADP-ribosylated.

It is found in the endoplasmic reticulum membrane. It catalyses the reaction L-aspartyl-[protein] + NAD(+) = 4-O-(ADP-D-ribosyl)-L-aspartyl-[protein] + nicotinamide. It carries out the reaction L-lysyl-[protein] + NAD(+) = N(6)-(ADP-D-ribosyl)-L-lysyl-[protein] + nicotinamide + H(+). The catalysed reaction is L-glutamyl-[protein] + NAD(+) = 5-O-(ADP-D-ribosyl)-L-glutamyl-[protein] + nicotinamide. With respect to regulation, in absence of activation signal, PARP16 is autoinhibited by the PARP alpha-helical domain (also named HD region), which prevents effective NAD(+)-binding. Activity is highly stimulated by signals, which unfold the PARP alpha-helical domain, relieving autoinhibition. In terms of biological role, intracellular mono-ADP-ribosyltransferase that plays a role in different processes, such as protein translation and unfolded protein response (UPR), through the mono-ADP-ribosylation of proteins involved in those processes. Acts as an inhibitor of protein translation by catalyzing mono-ADP-ribosylation of ribosomal subunits, such as RPL14 and RPS6, thereby inhibiting polysome assembly and mRNA loading. Mono-ADP-ribosylation of ribosomal subunits is promoted by NMNAT2. Involved in the unfolded protein response (UPR) by ADP-ribosylating and activating EIF2AK3 and ERN1, two important UPR effectors. May also mediate mono-ADP-ribosylation of karyopherin KPNB1 a nuclear import factor. May not modify proteins on arginine or cysteine residues compared to other mono-ADP-ribosyltransferases. This chain is Protein mono-ADP-ribosyltransferase PARP16, found in Mus musculus (Mouse).